A 244-amino-acid chain; its full sequence is 1-(5-phosphoribosyl)-5-[(5-phosphoribosylamino)methylideneamino] imidazole-4-carboxamide isomerase (244 aa).

Aspartate 8 serves as the catalytic Proton acceptor. The active-site Proton donor is the aspartate 129.

This sequence belongs to the HisA/HisF family.

It is found in the cytoplasm. The enzyme catalyses 1-(5-phospho-beta-D-ribosyl)-5-[(5-phospho-beta-D-ribosylamino)methylideneamino]imidazole-4-carboxamide = 5-[(5-phospho-1-deoxy-D-ribulos-1-ylimino)methylamino]-1-(5-phospho-beta-D-ribosyl)imidazole-4-carboxamide. It participates in amino-acid biosynthesis; L-histidine biosynthesis; L-histidine from 5-phospho-alpha-D-ribose 1-diphosphate: step 4/9. The sequence is that of 1-(5-phosphoribosyl)-5-[(5-phosphoribosylamino)methylideneamino] imidazole-4-carboxamide isomerase from Maricaulis maris (strain MCS10) (Caulobacter maris).